The chain runs to 338 residues: Ketol-acid reductoisomerase (NADP(+)) (338 aa).

The KARI N-terminal Rossmann domain maps to Met-1–Thr-181. Residues Phe-24–Gln-27, Lys-47, Ser-50, Ser-52, and Asp-82–Gln-85 each bind NADP(+). Residue His-107 is part of the active site. Gly-133 lines the NADP(+) pocket. In terms of domain architecture, KARI C-terminal knotted spans Asn-182–Leu-327. Mg(2+) contacts are provided by Asp-190, Glu-194, Glu-226, and Glu-230. Ser-251 lines the substrate pocket.

Belongs to the ketol-acid reductoisomerase family. Requires Mg(2+) as cofactor.

The catalysed reaction is (2R)-2,3-dihydroxy-3-methylbutanoate + NADP(+) = (2S)-2-acetolactate + NADPH + H(+). The enzyme catalyses (2R,3R)-2,3-dihydroxy-3-methylpentanoate + NADP(+) = (S)-2-ethyl-2-hydroxy-3-oxobutanoate + NADPH + H(+). It participates in amino-acid biosynthesis; L-isoleucine biosynthesis; L-isoleucine from 2-oxobutanoate: step 2/4. The protein operates within amino-acid biosynthesis; L-valine biosynthesis; L-valine from pyruvate: step 2/4. Involved in the biosynthesis of branched-chain amino acids (BCAA). Catalyzes an alkyl-migration followed by a ketol-acid reduction of (S)-2-acetolactate (S2AL) to yield (R)-2,3-dihydroxy-isovalerate. In the isomerase reaction, S2AL is rearranged via a Mg-dependent methyl migration to produce 3-hydroxy-3-methyl-2-ketobutyrate (HMKB). In the reductase reaction, this 2-ketoacid undergoes a metal-dependent reduction by NADPH to yield (R)-2,3-dihydroxy-isovalerate. This Chloroherpeton thalassium (strain ATCC 35110 / GB-78) protein is Ketol-acid reductoisomerase (NADP(+)).